An 82-amino-acid polypeptide reads, in one-letter code: Delta-conotoxin-like CnVIA (82 aa).

The signal sequence occupies residues 1 to 22 (MKLTCMMIVAVLFLTAWTFVTA). Residues 23–49 (DDSRNGLENLSPKARHEMKNPEASKSN) constitute a propeptide that is removed on maturation. Cystine bridges form between Cys-54-Cys-69, Cys-61-Cys-73, and Cys-68-Cys-78.

Belongs to the conotoxin O1 superfamily. As to expression, expressed by the venom duct.

The protein localises to the secreted. In terms of biological role, delta-conotoxins bind to site 6 of voltage-gated sodium channels (Nav) and inhibit the inactivation process. This is Delta-conotoxin-like CnVIA from Conus consors (Singed cone).